The sequence spans 464 residues: Chitotriosidase-1 (464 aa).

The first 21 residues, 1–21, serve as a signal peptide directing secretion; that stretch reads MVQSLAWAGVMTLLMVQWGSA. Residues 22–386 enclose the GH18 domain; it reads AKLVCYLTNW…RTLRQELNLP (365 aa). A disulfide bridge connects residues cysteine 26 and cysteine 51. Chitin contacts are provided by residues 70–71 and 97–100; these read EH and GGWT. Glutamate 140 functions as the Proton donor in the catalytic mechanism. 210–213 provides a ligand contact to chitin; it reads MAYD. Cysteine 307 and cysteine 368 are joined by a disulfide. Residues 385-416 are disordered; it reads LPSETPRSPEQIIPEPRPSSMPEQGPSPGLDN. The Chitin-binding type-2 domain occupies 415–464; it reads DNFCQGKADGVYPNPGDESTYYNCGGGRLFQQSCPPGLVFRASCKCCTWS. Cysteine 448 and cysteine 461 are oxidised to a cystine.

It belongs to the glycosyl hydrolase 18 family. Chitinase class II subfamily. As to quaternary structure, monomer. Highly expressed in tongue, stomach, kidney, brain, skin, testis, and bone marrow. Low level of expression was found in lung, heart, spleen, small intestine, and liver. Not detectable in pancreas, salivary gland, large intestine, uterus, or peripheral blood mononuclear cells (PBMC).

The protein localises to the secreted. Its subcellular location is the lysosome. The enzyme catalyses Random endo-hydrolysis of N-acetyl-beta-D-glucosaminide (1-&gt;4)-beta-linkages in chitin and chitodextrins.. Its function is as follows. Degrades chitin, chitotriose and chitobiose. May participate in the defense against nematodes and other pathogens. The polypeptide is Chitotriosidase-1 (Chit1) (Mus musculus (Mouse)).